A 507-amino-acid chain; its full sequence is ATP synthase subunit alpha, chloroplastic (507 aa).

Position 170–177 (170–177 (GDRQTGKT)) interacts with ATP.

This sequence belongs to the ATPase alpha/beta chains family. In terms of assembly, F-type ATPases have 2 components, CF(1) - the catalytic core - and CF(0) - the membrane proton channel. CF(1) has five subunits: alpha(3), beta(3), gamma(1), delta(1), epsilon(1). CF(0) has four main subunits: a, b, b' and c.

It localises to the plastid. The protein resides in the chloroplast thylakoid membrane. It catalyses the reaction ATP + H2O + 4 H(+)(in) = ADP + phosphate + 5 H(+)(out). Produces ATP from ADP in the presence of a proton gradient across the membrane. The alpha chain is a regulatory subunit. This is ATP synthase subunit alpha, chloroplastic from Vitis vinifera (Grape).